The chain runs to 115 residues: Large ribosomal subunit protein uL24 (115 aa).

This sequence belongs to the universal ribosomal protein uL24 family. As to quaternary structure, part of the 50S ribosomal subunit.

Its function is as follows. One of two assembly initiator proteins, it binds directly to the 5'-end of the 23S rRNA, where it nucleates assembly of the 50S subunit. In terms of biological role, one of the proteins that surrounds the polypeptide exit tunnel on the outside of the subunit. The protein is Large ribosomal subunit protein uL24 of Beutenbergia cavernae (strain ATCC BAA-8 / DSM 12333 / CCUG 43141 / JCM 11478 / NBRC 16432 / NCIMB 13614 / HKI 0122).